Consider the following 336-residue polypeptide: Inositol 2-dehydrogenase (336 aa).

Belongs to the Gfo/Idh/MocA family. In terms of assembly, homotetramer.

It carries out the reaction myo-inositol + NAD(+) = scyllo-inosose + NADH + H(+). Functionally, involved in the oxidation of myo-inositol (MI) to 2-keto-myo-inositol (2KMI or 2-inosose). This is Inositol 2-dehydrogenase from Pseudomonas fluorescens (strain ATCC BAA-477 / NRRL B-23932 / Pf-5).